A 335-amino-acid chain; its full sequence is Autophagy-related protein 21 (335 aa).

2 WD repeats span residues 165-205 (CHSS…LVTE) and 210-249 (YIPA…SDPN).

It belongs to the WD repeat PROPPIN family.

It is found in the cytoplasm. It localises to the golgi apparatus. The protein localises to the golgi stack membrane. Its subcellular location is the vacuole membrane. The protein resides in the preautophagosomal structure membrane. Its function is as follows. Required for cytoplasm to vacuole transport (Cvt) vesicles formation and autophagy. Has a role in sporulation. The sequence is that of Autophagy-related protein 21 (mug179) from Schizosaccharomyces pombe (strain 972 / ATCC 24843) (Fission yeast).